We begin with the raw amino-acid sequence, 362 residues long: MQESGLKPILWTNKELILLDQRVLPGTTSYLKAKTLEDCIFAIREMVVRGAPAIAITGAFGIALYLNGLSSQPTFSQLKTKLDELLESRPTAVNLRLVIEEFFSRFPEADYSSANLEKMQKSAEEFALFMLEEDLENNLTLSKNALSLFPKSPSSLNIITHCNTGALATAGHGTALGVIRSLRDAGHSLTVFADETRPYLQGARLTAWELKEEGIPSYLITDNMAGWVMSSRKIHAVIVGADRIASNGDTANKIGTYPLAIIAKHHGVPFYVAATSKSMDFRIPDGSHIPIEMRKENEVTSFGFLKDATGKPLLNEGVLAPNGIKALNPSFDVTPASLISGIITERGIISPVTEENLRKTFS.

Substrate is bound by residues R49–A51, R89, and Q201. D242 functions as the Proton donor in the catalytic mechanism. Substrate is bound at residue N252 to K253.

This sequence belongs to the eIF-2B alpha/beta/delta subunits family. MtnA subfamily.

The catalysed reaction is 5-(methylsulfanyl)-alpha-D-ribose 1-phosphate = 5-(methylsulfanyl)-D-ribulose 1-phosphate. The protein operates within amino-acid biosynthesis; L-methionine biosynthesis via salvage pathway; L-methionine from S-methyl-5-thio-alpha-D-ribose 1-phosphate: step 1/6. Catalyzes the interconversion of methylthioribose-1-phosphate (MTR-1-P) into methylthioribulose-1-phosphate (MTRu-1-P). The polypeptide is Methylthioribose-1-phosphate isomerase (Leptospira borgpetersenii serovar Hardjo-bovis (strain JB197)).